Here is a 241-residue protein sequence, read N- to C-terminus: Uridylate kinase (241 aa).

12-15 (KISG) provides a ligand contact to ATP. The tract at residues 20–25 (GEKGTG) is involved in allosteric activation by GTP. Gly-54 is a UMP binding site. Gly-55 and Arg-59 together coordinate ATP. Residues Asp-74 and 135-142 (TGNPYFST) contribute to the UMP site. ATP-binding residues include Asn-163, Tyr-169, and Asp-172.

Belongs to the UMP kinase family. As to quaternary structure, homohexamer.

It localises to the cytoplasm. It catalyses the reaction UMP + ATP = UDP + ADP. It participates in pyrimidine metabolism; CTP biosynthesis via de novo pathway; UDP from UMP (UMPK route): step 1/1. Allosterically activated by GTP. Inhibited by UTP. Catalyzes the reversible phosphorylation of UMP to UDP. This chain is Uridylate kinase, found in Lactobacillus delbrueckii subsp. bulgaricus (strain ATCC 11842 / DSM 20081 / BCRC 10696 / JCM 1002 / NBRC 13953 / NCIMB 11778 / NCTC 12712 / WDCM 00102 / Lb 14).